Consider the following 453-residue polypeptide: Gastrin/cholecystokinin type B receptor (453 aa).

The Extracellular segment spans residues 1–57; it reads MDLLKLNRSLQGPGPGSGSSLCRPGVSLLNSSSAGNLSCETPRIRGTGTRELELTIR. 3 N-linked (GlcNAc...) asparagine glycosylation sites follow: Asn-7, Asn-30, and Asn-36. A helical transmembrane segment spans residues 58 to 79; it reads ITLYAVIFLMSVGGNVLIIVVL. The Cytoplasmic portion of the chain corresponds to 80–87; the sequence is GLSRRLRT. Residues 88-109 form a helical membrane-spanning segment; sequence VTNAFLLSLAVSDLLLAVACMP. Topologically, residues 110 to 131 are extracellular; sequence FTLLPNLMGTFIFGTVICKAVS. A disulfide bond links Cys-127 and Cys-205. Residues 132 to 150 form a helical membrane-spanning segment; that stretch reads YLMGVSVSVSTLNLAAIAL. Topologically, residues 151-170 are cytoplasmic; sequence ERYSAICRPLQARVWQTRSH. Residues 171 to 189 traverse the membrane as a helical segment; sequence AARVILATWLLSGLLMVPY. The Extracellular portion of the chain corresponds to 190 to 219; it reads PVYTVVQPVGPRILQCMHLWPSERVQQMWS. A helical membrane pass occupies residues 220 to 242; it reads VLLLILLFFIPGVVMAVAYGLIS. Over 243 to 339 the chain is Cytoplasmic; it reads RELYLGLRFD…KLLAKKRVVR (97 aa). A disordered region spans residues 257 to 276; the sequence is SETQSRVRNQGGLPGGAAAP. A helical membrane pass occupies residues 340–361; sequence MLLVIVLLFFVCWLPVYSANTW. Topologically, residues 362-379 are extracellular; that stretch reads RAFDGPGARRALAGAPIS. Residues 380–400 traverse the membrane as a helical segment; sequence FIHLLSYTSACANPLVYCFMH. The Cytoplasmic segment spans residues 401-453; that stretch reads RRFRQACLDTCARCCPRPPRARPRPLPDEDPPTPSIASLSRLSYTTISTLGPG. A lipid anchor (S-palmitoyl cysteine) is attached at Cys-414.

Belongs to the G-protein coupled receptor 1 family.

The protein localises to the cell membrane. In terms of biological role, receptor for gastrin and cholecystokinin. The CCK-B receptors occur throughout the central nervous system where they modulate anxiety, analgesia, arousal, and neuroleptic activity. This receptor mediates its action by association with G proteins that activate a phosphatidylinositol-calcium second messenger system. In Mus musculus (Mouse), this protein is Gastrin/cholecystokinin type B receptor (Cckbr).